Here is a 241-residue protein sequence, read N- to C-terminus: Methylthioribulose-1-phosphate dehydratase (241 aa).

Residue C96 coordinates substrate. Positions 114 and 116 each coordinate Zn(2+). E138 acts as the Proton donor/acceptor in catalysis. Position 194 (H194) interacts with Zn(2+).

Belongs to the aldolase class II family. MtnB subfamily. It depends on Zn(2+) as a cofactor.

The protein localises to the cytoplasm. The catalysed reaction is 5-(methylsulfanyl)-D-ribulose 1-phosphate = 5-methylsulfanyl-2,3-dioxopentyl phosphate + H2O. Its pathway is amino-acid biosynthesis; L-methionine biosynthesis via salvage pathway; L-methionine from S-methyl-5-thio-alpha-D-ribose 1-phosphate: step 2/6. Functionally, catalyzes the dehydration of methylthioribulose-1-phosphate (MTRu-1-P) into 2,3-diketo-5-methylthiopentyl-1-phosphate (DK-MTP-1-P). Functions in the methionine salvage pathway. May play a role in apoptosis. In Danio rerio (Zebrafish), this protein is Methylthioribulose-1-phosphate dehydratase.